Reading from the N-terminus, the 227-residue chain is Enolase-phosphatase E1 (227 aa).

2 residues coordinate Mg(2+): Asp12 and Glu14. Substrate contacts are provided by residues 118-119 (SS) and Lys159. Asp186 contributes to the Mg(2+) binding site.

This sequence belongs to the HAD-like hydrolase superfamily. MasA/MtnC family. Monomer. Mg(2+) is required as a cofactor.

It localises to the cytoplasm. Its subcellular location is the nucleus. The catalysed reaction is 5-methylsulfanyl-2,3-dioxopentyl phosphate + H2O = 1,2-dihydroxy-5-(methylsulfanyl)pent-1-en-3-one + phosphate. The protein operates within amino-acid biosynthesis; L-methionine biosynthesis via salvage pathway; L-methionine from S-methyl-5-thio-alpha-D-ribose 1-phosphate: step 3/6. It functions in the pathway amino-acid biosynthesis; L-methionine biosynthesis via salvage pathway; L-methionine from S-methyl-5-thio-alpha-D-ribose 1-phosphate: step 4/6. Functionally, bifunctional enzyme that catalyzes the enolization of 2,3-diketo-5-methylthiopentyl-1-phosphate (DK-MTP-1-P) into the intermediate 2-hydroxy-3-keto-5-methylthiopentenyl-1-phosphate (HK-MTPenyl-1-P), which is then dephosphorylated to form the acireductone 1,2-dihydroxy-3-keto-5-methylthiopentene (DHK-MTPene). In Vanderwaltozyma polyspora (strain ATCC 22028 / DSM 70294 / BCRC 21397 / CBS 2163 / NBRC 10782 / NRRL Y-8283 / UCD 57-17) (Kluyveromyces polysporus), this protein is Enolase-phosphatase E1.